We begin with the raw amino-acid sequence, 335 residues long: 4-hydroxy-3-methylbut-2-enyl diphosphate reductase (335 aa).

C21 is a binding site for [4Fe-4S] cluster. The (2E)-4-hydroxy-3-methylbut-2-enyl diphosphate site is built by H50 and H86. Positions 50 and 86 each coordinate dimethylallyl diphosphate. Isopentenyl diphosphate-binding residues include H50 and H86. C108 is a binding site for [4Fe-4S] cluster. A (2E)-4-hydroxy-3-methylbut-2-enyl diphosphate-binding site is contributed by H136. H136 provides a ligand contact to dimethylallyl diphosphate. Residue H136 participates in isopentenyl diphosphate binding. The active-site Proton donor is E138. T177 provides a ligand contact to (2E)-4-hydroxy-3-methylbut-2-enyl diphosphate. Residue C207 coordinates [4Fe-4S] cluster. 4 residues coordinate (2E)-4-hydroxy-3-methylbut-2-enyl diphosphate: S235, S236, N237, and S280. 4 residues coordinate dimethylallyl diphosphate: S235, S236, N237, and S280. Residues S235, S236, N237, and S280 each coordinate isopentenyl diphosphate.

Belongs to the IspH family. [4Fe-4S] cluster is required as a cofactor.

The catalysed reaction is isopentenyl diphosphate + 2 oxidized [2Fe-2S]-[ferredoxin] + H2O = (2E)-4-hydroxy-3-methylbut-2-enyl diphosphate + 2 reduced [2Fe-2S]-[ferredoxin] + 2 H(+). It catalyses the reaction dimethylallyl diphosphate + 2 oxidized [2Fe-2S]-[ferredoxin] + H2O = (2E)-4-hydroxy-3-methylbut-2-enyl diphosphate + 2 reduced [2Fe-2S]-[ferredoxin] + 2 H(+). It functions in the pathway isoprenoid biosynthesis; dimethylallyl diphosphate biosynthesis; dimethylallyl diphosphate from (2E)-4-hydroxy-3-methylbutenyl diphosphate: step 1/1. Its pathway is isoprenoid biosynthesis; isopentenyl diphosphate biosynthesis via DXP pathway; isopentenyl diphosphate from 1-deoxy-D-xylulose 5-phosphate: step 6/6. In terms of biological role, catalyzes the conversion of 1-hydroxy-2-methyl-2-(E)-butenyl 4-diphosphate (HMBPP) into a mixture of isopentenyl diphosphate (IPP) and dimethylallyl diphosphate (DMAPP). Acts in the terminal step of the DOXP/MEP pathway for isoprenoid precursor biosynthesis. The sequence is that of 4-hydroxy-3-methylbut-2-enyl diphosphate reductase from Rhizobium rhizogenes (strain K84 / ATCC BAA-868) (Agrobacterium radiobacter).